The primary structure comprises 169 residues: 16S rRNA aminocarboxypropyltransferase (169 aa).

Thr-15, Val-65, Leu-88, and Thr-107 together coordinate S-adenosyl-L-methionine.

The protein belongs to the TDD superfamily. TSR3 family.

The protein resides in the cytoplasm. It carries out the reaction an N(1)-methylpseudouridine in rRNA + S-adenosyl-L-methionine = N(1)-methyl-N(3)-[(3S)-3-amino-3-carboxypropyl]pseudouridine in rRNA + S-methyl-5'-thioadenosine + H(+). Its function is as follows. Aminocarboxypropyltransferase that catalyzes the aminocarboxypropyl transfer on pseudouridine corresponding to position 914 in M.jannaschii 16S rRNA. It constitutes the last step in biosynthesis of the hypermodified N1-methyl-N3-(3-amino-3-carboxypropyl) pseudouridine (m1acp3-Psi). The chain is 16S rRNA aminocarboxypropyltransferase from Methanopyrus kandleri (strain AV19 / DSM 6324 / JCM 9639 / NBRC 100938).